The sequence spans 163 residues: Protein MATERNALLY EXPRESSED GENE 5 (163 aa).

Residues 38–117 (STLYIEGLPA…DDVNVSAPAE (80 aa)) form the RRM domain. 2 disulfides stabilise this stretch: Cys-140–Cys-162 and Cys-143–Cys-151.

This sequence belongs to the MEG family. As to expression, ubiquitous.

This is Protein MATERNALLY EXPRESSED GENE 5 (MEG5) from Zea mays (Maize).